The primary structure comprises 417 residues: Nucleosome assembly protein (417 aa).

The segment at 1–47 is disordered; it reads MSDPIRTKPKSSMQIDNAPTPHNTPASVLNPSYLKNGNPVRAQAQEQ. Positions 10–35 are enriched in polar residues; it reads KSSMQIDNAPTPHNTPASVLNPSYLK. Phosphothreonine occurs at positions 20 and 24. Position 27 is a phosphoserine (Ser27). Residue Lys50 forms a Glycyl lysine isopeptide (Lys-Gly) (interchain with G-Cter in ubiquitin) linkage. Thr53 is modified (phosphothreonine). Phosphoserine occurs at positions 69, 76, 82, 98, 104, and 140. The interaction with NBA1 stretch occupies residues 143–362; sequence EQPKPEQIAK…IPRAVDWFTG (220 aa). Ser159 and Ser177 each carry phosphoserine; by CK2. Residues 330-356 constitute a DNA-binding region (H-T-H motif); sequence LEEDLEERLALDYSIGEQLKDKLIPRA. Residues 364–417 are disordered; the sequence is ALEFEFEEDEEEADEDEDEEEDDDHGLEDDDGESAEEQDDFAGRPEQAPECKQS. The span at 367–403 shows a compositional bias: acidic residues; the sequence is FEFEEDEEEADEDEDEEEDDDHGLEDDDGESAEEQDD. Phosphoserine; by CK2 is present on Ser397. The segment covering 404–417 has biased composition (basic and acidic residues); it reads FAGRPEQAPECKQS.

Belongs to the nucleosome assembly protein (NAP) family. In terms of assembly, component of the GIN4 complex composed of at least BNI5, CDC3, CDC10, CDC11, CDC12, GIN4, NAP1 and SHS1 which forms a ring at the bud neck. Homodimer (in-vitro). Interacts with the B-type cyclin CLB2. Interacts with 60S ribosomal protein L18 (RPL18A or RPL18B), CKA2, CKI1, eukaryotic elongation factor 1 complex eEF1A (TEF1 or TEF2), FOL1, HSC82, HTA2, HTB2, HTZ1, KAP114, KCC4, NIS1, SSA1, SSA2, SSB1, SSC1, SHM1, SIP5 and TCO89. Interacts with NBA1. Interacts with histone H3/H4 heterodimers. In terms of processing, phosphorylation by CK2 is required for normal progression through S phase. CK2 phosphorylation is not required for correct bud formation nor histone binding.

The protein resides in the cytoplasm. It is found in the nucleus. It localises to the bud neck. Functionally, acidic protein, which assembles histones into an octamer (in vitro). Involved in the regulation of the localization and the function of the septins during mitosis. Involved in the function of B-type cyclins. The chain is Nucleosome assembly protein from Saccharomyces cerevisiae (strain ATCC 204508 / S288c) (Baker's yeast).